Consider the following 190-residue polypeptide: Large ribosomal subunit protein eL15 (190 aa).

It belongs to the eukaryotic ribosomal protein eL15 family.

This Nanoarchaeum equitans (strain Kin4-M) protein is Large ribosomal subunit protein eL15 (rpl15e).